A 113-amino-acid polypeptide reads, in one-letter code: UPF0482 protein YnfB (113 aa).

Positions 1-28 are cleaved as a signal peptide; that stretch reads MKITLSKRIGLLAILLPCALALSTTVHA.

It belongs to the UPF0482 family.

The sequence is that of UPF0482 protein YnfB from Escherichia coli O8 (strain IAI1).